The sequence spans 209 residues: Uracil phosphoribosyltransferase (209 aa).

Residues R79, R104, and D131–S139 each bind 5-phospho-alpha-D-ribose 1-diphosphate. Uracil contacts are provided by residues I194 and G199–A201. D200 lines the 5-phospho-alpha-D-ribose 1-diphosphate pocket.

The protein belongs to the UPRTase family. Mg(2+) is required as a cofactor.

It carries out the reaction UMP + diphosphate = 5-phospho-alpha-D-ribose 1-diphosphate + uracil. It functions in the pathway pyrimidine metabolism; UMP biosynthesis via salvage pathway; UMP from uracil: step 1/1. With respect to regulation, allosterically activated by GTP. Catalyzes the conversion of uracil and 5-phospho-alpha-D-ribose 1-diphosphate (PRPP) to UMP and diphosphate. The sequence is that of Uracil phosphoribosyltransferase from Clostridium perfringens (strain SM101 / Type A).